A 262-amino-acid chain; its full sequence is tRNA pseudouridine synthase B (262 aa).

Asp-77 functions as the Nucleophile in the catalytic mechanism.

This sequence belongs to the pseudouridine synthase TruB family. Type 1 subfamily.

The catalysed reaction is uridine(55) in tRNA = pseudouridine(55) in tRNA. Its function is as follows. Responsible for synthesis of pseudouridine from uracil-55 in the psi GC loop of transfer RNAs. This Protochlamydia amoebophila (strain UWE25) protein is tRNA pseudouridine synthase B.